The sequence spans 232 residues: Ion-translocating oxidoreductase complex subunit E (232 aa).

6 helical membrane-spanning segments follow: residues 18–38 (GLVQ…LTNA), 39–59 (LGLG…VSLV), 69–89 (IPVF…VINA), 93–113 (GLYL…VIIG), 128–148 (AFDG…LGAV), and 182–202 (SFLL…LIAG).

It belongs to the NqrDE/RnfAE family. The complex is composed of six subunits: RnfA, RnfB, RnfC, RnfD, RnfE and RnfG.

It is found in the cell inner membrane. In terms of biological role, part of a membrane-bound complex that couples electron transfer with translocation of ions across the membrane. In Shewanella amazonensis (strain ATCC BAA-1098 / SB2B), this protein is Ion-translocating oxidoreductase complex subunit E.